Reading from the N-terminus, the 172-residue chain is Sec-independent protein translocase protein TatB (172 aa).

A helical membrane pass occupies residues 1–21 (MFDIGWSELLVIGVVALIAIG).

Belongs to the TatB family. In terms of assembly, the Tat system comprises two distinct complexes: a TatABC complex, containing multiple copies of TatA, TatB and TatC subunits, and a separate TatA complex, containing only TatA subunits. Substrates initially bind to the TatABC complex, which probably triggers association of the separate TatA complex to form the active translocon.

The protein localises to the cell inner membrane. Functionally, part of the twin-arginine translocation (Tat) system that transports large folded proteins containing a characteristic twin-arginine motif in their signal peptide across membranes. Together with TatC, TatB is part of a receptor directly interacting with Tat signal peptides. TatB may form an oligomeric binding site that transiently accommodates folded Tat precursor proteins before their translocation. The sequence is that of Sec-independent protein translocase protein TatB from Rhodopseudomonas palustris (strain BisB18).